The sequence spans 513 residues: MEKLEGYSEKPKSRQQYFVYPLLFQEYIYAFAHDYGLNGSEPVEIFGCNNKKFSSLLVKRLIIRMYQQNFWINSVNHPNQDRLLDHSNYFYSDFYSQILSEGFAIVVEIPFSLGELFCPEEKQIPKFQNLQSIHSIFPFLEDKFLHLHYLSHIEIPYPIHLEILVQLLEYRIQDVPSLHLLRFFLNYYSNWNSLITSMKSIFLLKKENKRLFRFLYNSYVSEYEFFLLFLRKQSSCLRLTSSGTFLERIHFSRKMEHLGVMYPGFFRKTIWFFMDPLMHYVRYQGKAILASKGTLLLKKKWKSYLVNFSQYFFSFWIQPQRICLNQLTNSCFDFLGYLSSVPINTLLVRNQMLENSFLIDTRMKKFDTTVPAIPLIGSLSKAQFCTGSGHPISKPVWTDLSDSDILDRFGRICRNLFHYHSGSSKKRTLYRLKYILRLSCARTLARKHKSTVRTFMQRLGSVFLEEFFTEEEQVFSLMFTKTTHFSFHGSHSERIWYLDIIRINDLVNPLILN.

This sequence belongs to the intron maturase 2 family. MatK subfamily.

Its subcellular location is the plastid. It is found in the chloroplast. Functionally, usually encoded in the trnK tRNA gene intron. Probably assists in splicing its own and other chloroplast group II introns. The chain is Maturase K from Arundo donax (Giant reed).